A 281-amino-acid polypeptide reads, in one-letter code: DegV domain-containing protein (281 aa).

In terms of domain architecture, DegV spans 3-280 (WKIVSDSGCD…EGGLLMGYEI (278 aa)). 2 residues coordinate hexadecanoate: serine 63 and serine 91.

Its function is as follows. May bind long-chain fatty acids, such as palmitate, and may play a role in lipid transport or fatty acid metabolism. This is DegV domain-containing protein from Streptococcus gordonii.